The following is a 25-amino-acid chain: Glutamine synthetase 2 isozyme (25 aa).

It belongs to the glutamine synthetase family. In terms of assembly, homohexamer.

Its subcellular location is the plastid. The protein resides in the chloroplast. The catalysed reaction is L-glutamate + NH4(+) + ATP = L-glutamine + ADP + phosphate + H(+). In terms of biological role, plays a key role in the nitrogen metabolism of microorganisms, animals and plants. In Emiliania huxleyi (Coccolithophore), this protein is Glutamine synthetase 2 isozyme.